The primary structure comprises 440 residues: C4-dicarboxylate transport protein (440 aa).

The next 8 helical transmembrane spans lie at leucine 8–alanine 28, phenylalanine 40–isoleucine 60, leucine 74–valine 94, glycine 147–lysine 167, isoleucine 187–valine 207, leucine 221–leucine 241, valine 288–leucine 308, and alanine 354–valine 374. The tract at residues glutamate 419–glycine 440 is disordered.

It belongs to the dicarboxylate/amino acid:cation symporter (DAACS) (TC 2.A.23) family.

The protein localises to the cell inner membrane. Its function is as follows. Responsible for the transport of dicarboxylates such as succinate, fumarate, and malate from the periplasm across the membrane. This is C4-dicarboxylate transport protein from Anaeromyxobacter sp. (strain K).